The primary structure comprises 569 residues: Peroxisomal targeting signal receptor (569 aa).

Cysteine 5 is covalently cross-linked (Glycyl cysteine thioester (Cys-Gly) (interchain with G-Cter in ubiquitin)). Residues 6 to 28 form an amphipathic helix 1 (AH1) region; that stretch reads SVGANPLAQLNKRVQQDRTLQHG. Residue lysine 17 forms a Glycyl lysine isopeptide (Lys-Gly) (interchain with G-Cter in ubiquitin) linkage. The segment at 53 to 71 is amphipathic helix 2 (AH2); that stretch reads KFQMEQFMAGKASSGGNMF. The short motif at 112 to 116 is the WxxxF/Y motif 1 element; the sequence is WSQEF. The interval 150–154 is amphipathic helix 3 (AH3); sequence PMNMM. The WxxxF/Y motif 2 signature appears at 181–185; the sequence is WEQQF. The tract at residues 229-245 is amphipathic helix 4 (AH4); that stretch reads FQQIWNDIHDQTDDLDS. TPR repeat units lie at residues 281-315, 316-349, 417-450, 452-484, and 486-518; these read NTDA…DPGH, VDAW…DPHN, PDVQ…RPDD, CMWN…KPTF, and RARY…HEVE.

The protein belongs to the peroxisomal targeting signal receptor family. In terms of assembly, interacts (via WxxxF/Y and LVxEF motifs) with PEX14; promoting translocation through the PEX13-PEX14 docking complex. Monoubiquitinated at Cys-5 by PEX2 during PEX5 passage through the retrotranslocation channel: monoubiquitination acts as a signal for PEX5 extraction and is required for proper export from peroxisomes and recycling. When PEX5 recycling is compromised, polyubiquitinated at Lys-17 by PEX10 during its passage through the retrotranslocation channel, leading to its degradation.

The protein resides in the cytoplasm. It is found in the cytosol. The protein localises to the peroxisome matrix. Receptor that mediates peroxisomal import of proteins containing a C-terminal PTS1-type tripeptide peroxisomal targeting signal (SKL-type). Binds to cargo proteins containing a PTS1 peroxisomal targeting signal in the cytosol, and translocates them into the peroxisome matrix by passing through the PEX13-PEX14 docking complex along with cargo proteins. PEX5 receptor is then retrotranslocated into the cytosol, leading to release of bound cargo in the peroxisome matrix, and reset for a subsequent peroxisome import cycle. This chain is Peroxisomal targeting signal receptor (PEX5), found in Eremothecium gossypii (strain ATCC 10895 / CBS 109.51 / FGSC 9923 / NRRL Y-1056) (Yeast).